A 286-amino-acid polypeptide reads, in one-letter code: Tryptophan 2,3-dioxygenase (286 aa).

Substrate is bound by residues 53 to 57 (FIVQH), Tyr115, and Arg119. Residue His242 coordinates heme. Residue Thr256 participates in substrate binding.

It belongs to the tryptophan 2,3-dioxygenase family. In terms of assembly, homotetramer. Requires heme as cofactor.

It catalyses the reaction L-tryptophan + O2 = N-formyl-L-kynurenine. Its pathway is amino-acid degradation; L-tryptophan degradation via kynurenine pathway; L-kynurenine from L-tryptophan: step 1/2. Functionally, heme-dependent dioxygenase that catalyzes the oxidative cleavage of the L-tryptophan (L-Trp) pyrrole ring and converts L-tryptophan to N-formyl-L-kynurenine. Catalyzes the oxidative cleavage of the indole moiety. The polypeptide is Tryptophan 2,3-dioxygenase (Kineococcus radiotolerans (strain ATCC BAA-149 / DSM 14245 / SRS30216)).